Reading from the N-terminus, the 264-residue chain is NAD kinase 1 (264 aa).

Asp-45 acts as the Proton acceptor in catalysis. Residues 45–46 (DG), 122–123 (NE), Arg-148, Asp-150, 161–166 (TAYNKS), and Ala-185 each bind NAD(+).

Belongs to the NAD kinase family. A divalent metal cation serves as cofactor.

Its subcellular location is the cytoplasm. It catalyses the reaction NAD(+) + ATP = ADP + NADP(+) + H(+). Involved in the regulation of the intracellular balance of NAD and NADP, and is a key enzyme in the biosynthesis of NADP. Catalyzes specifically the phosphorylation on 2'-hydroxyl of the adenosine moiety of NAD to yield NADP. The protein is NAD kinase 1 of Listeria monocytogenes serotype 4b (strain F2365).